Consider the following 390-residue polypeptide: Digeranylgeranylglycerophospholipid reductase (390 aa).

Residues Ala18, Glu37, Cys48, Ala49, Ala51, Arg98, Val122, Asp278, Gly290, and Ile291 each contribute to the FAD site. Val368 is a binding site for a 2,3-bis-O-(geranylgeranyl)-sn-glycerol 1-phospholipid.

The protein belongs to the geranylgeranyl reductase family. DGGGPL reductase subfamily. It depends on FAD as a cofactor.

It carries out the reaction a 2,3-bis-O-phytanyl-sn-glycerol 1-phospholipid + 8 A = a 2,3-bis-O-(geranylgeranyl)-sn-glycerol 1-phospholipid + 8 AH2. The enzyme catalyses 2,3-bis-O-(phytanyl)-sn-glycerol 1-phosphate + 8 A = 2,3-bis-O-(geranylgeranyl)-sn-glycerol 1-phosphate + 8 AH2. It catalyses the reaction CDP-2,3-bis-O-(geranylgeranyl)-sn-glycerol + 8 AH2 = CDP-2,3-bis-O-(phytanyl)-sn-glycerol + 8 A. The catalysed reaction is archaetidylserine + 8 AH2 = 2,3-bis-O-phytanyl-sn-glycero-3-phospho-L-serine + 8 A. The protein operates within membrane lipid metabolism; glycerophospholipid metabolism. Functionally, is involved in the reduction of 2,3-digeranylgeranylglycerophospholipids (unsaturated archaeols) into 2,3-diphytanylglycerophospholipids (saturated archaeols) in the biosynthesis of archaeal membrane lipids. Catalyzes the formation of archaetidic acid (2,3-di-O-phytanyl-sn-glyceryl phosphate) from 2,3-di-O-geranylgeranylglyceryl phosphate (DGGGP) via the hydrogenation of each double bond of the isoprenoid chains. Is also probably able to reduce double bonds of geranyl groups in CDP-2,3-bis-O-(geranylgeranyl)-sn-glycerol and archaetidylserine, thus acting at various stages in the biosynthesis of archaeal membrane lipids. The polypeptide is Digeranylgeranylglycerophospholipid reductase (Methanococcus maripaludis (strain C5 / ATCC BAA-1333)).